We begin with the raw amino-acid sequence, 242 residues long: MGRGRVELKRIENKINRQVTFAKRRNGLLKKAYELSVLCDAEVALIIFSNRGKLYEFCSSSSMLKTLERYQKCNYGAPETNVSTREALELSSQQEYLKLKARYEALQRSQRNLLGEDLGPLSTKELESLERQLDVSLKQIRSTRTQYMLDQLTDLQRKEHMLNEANKTLKQRLLEGTQVNQLQWNPNAQDVGYGRQQAQPQGDGFFHPLECEPTLQIGYQPDPITVAAAGPSVNNYMPGWLP.

In terms of domain architecture, MADS-box spans 1–61; that stretch reads MGRGRVELKR…GKLYEFCSSS (61 aa). In terms of domain architecture, K-box spans 89–185; sequence ELSSQQEYLK…GTQVNQLQWN (97 aa).

Expressed in flowers and seeds.

It is found in the nucleus. Its function is as follows. Probable transcription factor involved in flower development. In Vitis vinifera (Grape), this protein is Agamous-like MADS-box protein MADS4.